The chain runs to 332 residues: Anthranilate phosphoribosyltransferase (332 aa).

5-phospho-alpha-D-ribose 1-diphosphate is bound by residues G79, 82-83 (GD), S87, 89-92 (NIST), 107-115 (KHGNRSVSS), and S119. G79 contributes to the anthranilate binding site. Residue S91 coordinates Mg(2+). N110 contributes to the anthranilate binding site. R165 contacts anthranilate. Positions 223 and 224 each coordinate Mg(2+).

This sequence belongs to the anthranilate phosphoribosyltransferase family. In terms of assembly, homodimer. Mg(2+) serves as cofactor.

It carries out the reaction N-(5-phospho-beta-D-ribosyl)anthranilate + diphosphate = 5-phospho-alpha-D-ribose 1-diphosphate + anthranilate. It participates in amino-acid biosynthesis; L-tryptophan biosynthesis; L-tryptophan from chorismate: step 2/5. Its function is as follows. Catalyzes the transfer of the phosphoribosyl group of 5-phosphorylribose-1-pyrophosphate (PRPP) to anthranilate to yield N-(5'-phosphoribosyl)-anthranilate (PRA). This chain is Anthranilate phosphoribosyltransferase, found in Sodalis glossinidius (strain morsitans).